The chain runs to 106 residues: Nucleoid-associated protein RPB_0667 (106 aa).

This sequence belongs to the YbaB/EbfC family. Homodimer.

Its subcellular location is the cytoplasm. The protein localises to the nucleoid. Its function is as follows. Binds to DNA and alters its conformation. May be involved in regulation of gene expression, nucleoid organization and DNA protection. The protein is Nucleoid-associated protein RPB_0667 of Rhodopseudomonas palustris (strain HaA2).